We begin with the raw amino-acid sequence, 222 residues long: Small ribosomal subunit protein uS3 (222 aa).

The 71-residue stretch at 39–109 folds into the KH type-2 domain; sequence IRNFVKKKVY…NILINIVEVK (71 aa).

This sequence belongs to the universal ribosomal protein uS3 family. Part of the 30S ribosomal subunit. Forms a tight complex with proteins S10 and S14.

In terms of biological role, binds the lower part of the 30S subunit head. Binds mRNA in the 70S ribosome, positioning it for translation. This is Small ribosomal subunit protein uS3 from Clostridium tetani (strain Massachusetts / E88).